A 500-amino-acid chain; its full sequence is NAD(P)H-quinone oxidoreductase chain 4, chloroplastic (500 aa).

The next 14 helical transmembrane spans lie at 4–24 (FPWLTIIVVLPISAGSLIFFL), 37–57 (ICICVLELLLTTYAFCYHFQL), 87–107 (IGPILLTGFITTLATLAAWPV), 113–130 (LFHFLMLAMYSGQIGSFS), 134–154 (LLLFFLMWELELIPVYLLLSM), 167–187 (FILYTAGGSIFLLIGVLGIGL), 207–227 (IALEIIFYIGFLIAFAVKSPI), 242–262 (HYSTCMLLAGILLKMGAYGLV), 272–292 (AHSLFSPWLVVVGTMQIIYAA), 305–325 (IAYSSVSHMGFIIIGIGSITD), 330–350 (GAILQIVSHGFIGAALFFLAG), 386–406 (LALPGMSGFVAELIVFFGIIT), 411–431 (FLMAKILITFVMAIGMILTPI), and 462–482 (LFVSISILLPVIGIGIYPDFL).

The protein belongs to the complex I subunit 4 family.

Its subcellular location is the plastid. The protein resides in the chloroplast thylakoid membrane. The catalysed reaction is a plastoquinone + NADH + (n+1) H(+)(in) = a plastoquinol + NAD(+) + n H(+)(out). It carries out the reaction a plastoquinone + NADPH + (n+1) H(+)(in) = a plastoquinol + NADP(+) + n H(+)(out). The chain is NAD(P)H-quinone oxidoreductase chain 4, chloroplastic from Carica papaya (Papaya).